We begin with the raw amino-acid sequence, 132 residues long: ATP synthase epsilon chain, chloroplastic (132 aa).

This sequence belongs to the ATPase epsilon chain family. In terms of assembly, F-type ATPases have 2 components, CF(1) - the catalytic core - and CF(0) - the membrane proton channel. CF(1) has five subunits: alpha(3), beta(3), gamma(1), delta(1), epsilon(1). CF(0) has three main subunits: a, b and c.

It localises to the plastid. The protein localises to the chloroplast thylakoid membrane. Produces ATP from ADP in the presence of a proton gradient across the membrane. The protein is ATP synthase epsilon chain, chloroplastic of Calycanthus floridus var. glaucus (Eastern sweetshrub).